The chain runs to 142 residues: Multiprotein-bridging factor 1a (142 aa).

Residues 51–64 are compositionally biased toward polar residues; sequence GTNKAASSGTSLNT. Positions 51-77 are disordered; that stretch reads GTNKAASSGTSLNTKMLDDDTENLTHE. Residues 87-141 enclose the HTH cro/C1-type domain; it reads IMQARTDKKLTQSQLAQIINEKPQVIQEYESGKAIPNQQILSKLERALGAKLRGK. Residues 98–117 constitute a DNA-binding region (H-T-H motif); it reads QSQLAQIINEKPQVIQEYES.

Belongs to the MBF1 family. Expressed in leaves, roots, stems, flowers, siliques and shoots. Detected only in anthers and some seeds in siliques.

Its subcellular location is the nucleus. It localises to the nucleolus. Its function is as follows. Transcriptional coactivator that stimulates transcriptional activity by bridging regulatory proteins and TBP, thereby recruiting TBP to promoters occupied by DNA-binding regulators. The chain is Multiprotein-bridging factor 1a (MBF1A) from Arabidopsis thaliana (Mouse-ear cress).